Here is a 484-residue protein sequence, read N- to C-terminus: Arginine ADP-riboxanase OspC2 (484 aa).

The NAD(+) site is built by His143, Gln144, Ser145, Leu149, Ile162, Asn172, Phe188, His206, Phe211, Asp231, and Glu326. Residue Glu326 is part of the active site. ANK repeat units follow at residues 414–444 (LYDVEYLLSEDSANYKVLEYFISNGLVDVNK) and 451–480 (SGDTMLDNAMKSKDSKTIDFLLKNGAVSGK).

Belongs to the OspC family.

Its subcellular location is the secreted. The catalysed reaction is L-arginyl-[protein] + NAD(+) = ADP-riboxanated L-argininyl-[protein] + nicotinamide + NH4(+) + H(+). Its function is as follows. ADP-riboxanase effector that mediates arginine ADP-riboxanation of host caspases. ADP-riboxanation of host apoptotic caspases (CASP3 and CASP9) prevents their activation, thereby inhibiting host cell extrinsic and intrinsic apoptosis. Does not catalyze ADP-riboxanation of host CASP4/CASP11 or CASP8. In contrast to Ospc1 and OspC3, not able to inactivate host calmodulin. This chain is Arginine ADP-riboxanase OspC2, found in Shigella flexneri.